We begin with the raw amino-acid sequence, 1025 residues long: Multidrug resistance protein MdtC (1025 aa).

12 helical membrane passes run Phe3 to Leu23, Glu333 to Leu353, Ile360 to Cys380, Leu387 to Leu407, Val431 to Leu451, Phe463 to Pro483, Leu528 to Pro548, Val853 to Ser873, Val875 to Leu895, Leu897 to Val917, Pro953 to Gly973, and Ile984 to Val1004.

This sequence belongs to the resistance-nodulation-cell division (RND) (TC 2.A.6) family. MdtC subfamily. In terms of assembly, part of a tripartite efflux system composed of MdtA, MdtB and MdtC. MdtC forms a heteromultimer with MdtB.

The protein resides in the cell inner membrane. Functionally, the MdtABC tripartite complex confers resistance against novobiocin and deoxycholate. This chain is Multidrug resistance protein MdtC, found in Escherichia coli (strain UTI89 / UPEC).